We begin with the raw amino-acid sequence, 87 residues long: UPF0147 protein AF_2370.1 (87 aa).

Belongs to the UPF0147 family.

In Archaeoglobus fulgidus (strain ATCC 49558 / DSM 4304 / JCM 9628 / NBRC 100126 / VC-16), this protein is UPF0147 protein AF_2370.1.